The sequence spans 776 residues: MAEPRQEFDVMEDHAGTYGLGDRKDQGGYTMLQDQEGDTDAGLKESPLQTPAEDGSEEPGSETSDAKSTPTAEDVTAPLVDEGAPXKQAAAQPHTEIPEGTTAEEAGIGDTPSLEDEAAGHVTQEPESGKVVREGFLGEPGPRSXSHQLASGMPGAPLLPEGPREATRQPSGTGPEDTEGGRHAPELLKHQLLGDLHQEGPPLKRAGGKERPGIKEEVDEDRDVDESSPQDSPPSKVSPAHDGRPPQTAAREATSIPGFPAEGAIPLPVDFLSKVSTEIPASEPDGPSAGRAEGQDAPPEFTFHVEITPNVQKEQAHSEEHLGRAAFPGAPGEGPEAQGPSLGEDTKEADLPEPSEKQPAAAPRGKPISRVPQLKARMVSKSKDGTGSDDKKAKTSTRSSAKTLKNRPCLSPKHPTPGSSDPLIQPSSPAVCPEPPSSPKYVSSVTXRTGSSGAKEMKLKGADGKTKIATPRGAAPPGQKGQANATRIPAKTPPAPKTPPSSVTKQVQRRPPPAGPKSERGEPPKSGDRSGYSSPGSPGTPGSRSRTPSLPTPPTREPKKVAVVRTPPKSPSSAKSRLQTAPVPMPDLKNVKSKIGSTENLKHQPGGGKVQIINKKLDLSNVQSKCGSKDNIKHVPGGGSVQIVYKPVDLSKVTSKCGSLGNIHHKPGGGQVEVKSEKLDFKDRVQSKIGSLDNITHVPGGGNKKIETHKLTFRENAKAKTDHGAEIVYKSPVVSGDTSPRHLSNVSSTGSIDMVDSPQLATLADEVSASLAKQGL.

Over residues 1-26 (MAEPRQEFDVMEDHAGTYGLGDRKDQ) the composition is skewed to basic and acidic residues. Positions 1 to 591 (MAEPRQEFDV…PVPMPDLKNV (591 aa)) are disordered. Ala-2 is modified (N-acetylalanine). 2 positions are modified to phosphotyrosine: Tyr-18 and Tyr-29. A Glycyl lysine isopeptide (Lys-Gly) (interchain with G-Cter in ubiquitin) cross-link involves residue Lys-44. Phosphoserine is present on residues Ser-46 and Ser-61. The span at 61–71 (SETSDAKSTPT) shows a compositional bias: polar residues. Phosphothreonine occurs at positions 69, 71, and 111. 2 stretches are compositionally biased toward basic and acidic residues: residues 179–189 (EGGRHAPELLK) and 207–216 (GGKERPGIKE). Over residues 217 to 228 (EVDEDRDVDESS) the composition is skewed to acidic residues. The span at 314 to 323 (EQAHSEEHLG) shows a compositional bias: basic and acidic residues. A compositionally biased stretch (low complexity) spans 325–340 (AAFPGAPGEGPEAQGP). 2 stretches are compositionally biased toward basic and acidic residues: residues 344–356 (EDTK…EPSE) and 381–393 (KSKD…DKKA). Over residues 442–453 (VSSVTXRTGSSG) the composition is skewed to low complexity. Over residues 455-466 (KEMKLKGADGKT) the composition is skewed to basic and acidic residues. The residue at position 470 (Thr-470) is a Phosphothreonine. Arg-472 is modified (omega-N-methylarginine). At Lys-480 the chain carries N6,N6-dimethyllysine; alternate. Residue Lys-480 is modified to N6-acetyllysine; alternate. Phosphothreonine is present on residues Thr-486, Thr-492, and Thr-498. Residues Ser-502, Ser-526, and Ser-530 each carry the phosphoserine modification. Residues 517–528 (KSERGEPPKSGD) are compositionally biased toward basic and acidic residues. Over residues 529 to 549 (RSGYSSPGSPGTPGSRSRTPS) the composition is skewed to low complexity. Phosphotyrosine is present on Tyr-532. Phosphoserine occurs at positions 533, 534, and 537. 2 positions are modified to phosphothreonine: Thr-540 and Thr-547. Phosphoserine is present on Ser-549. Thr-552 carries the phosphothreonine modification. At Lys-560 the chain carries N6-acetyllysine. Phosphothreonine is present on Thr-566. 2 positions are modified to phosphoserine: Ser-570 and Ser-572. Tau/MAP repeat units lie at residues 579–609 (QTAP…GGGK), 610–640 (VQII…GGGS), 641–671 (VQIV…GGGQ), and 672–703 (VEVK…GGGN). A Glycyl lysine isopeptide (Lys-Gly) (interchain with G-Cter in ubiquitin) cross-link involves residue Lys-589. N6-acetyllysine; alternate is present on Lys-594. Position 594 is an N6-methyllysine; alternate (Lys-594). Residue Lys-594 forms a Glycyl lysine isopeptide (Lys-Gly) (interchain with G-Cter in ubiquitin); alternate linkage. Ser-597 bears the Phosphoserine mark. A Glycyl lysine isopeptide (Lys-Gly) (interchain with G-Cter in ubiquitin) cross-link involves residue Lys-602. N6-acetyllysine; alternate is present on Lys-616. Lys-616 participates in a covalent cross-link: Glycyl lysine isopeptide (Lys-Gly) (interchain with G-Cter in ubiquitin); alternate. Ser-620 and Ser-624 each carry phosphoserine. Lys-625 bears the N6-acetyllysine mark. At Ser-628 the chain carries Phosphoserine. An N6-acetyllysine; alternate modification is found at Lys-633. Lys-633 is covalently cross-linked (Glycyl lysine isopeptide (Lys-Gly) (interchain with G-Cter in ubiquitin); alternate). Position 640 is a phosphoserine (Ser-640). Lys-646 carries the post-translational modification N6,N6-dimethyllysine; alternate. An N6-acetyllysine; alternate mark is found at Lys-646, Lys-652, and Lys-656. Residues Lys-646, Lys-652, and Lys-656 each participate in a glycyl lysine isopeptide (Lys-Gly) (interchain with G-Cter in ubiquitin); alternate cross-link. Ser-659 carries the post-translational modification Phosphoserine. An N6-acetyllysine; alternate mark is found at Lys-666, Lys-678, and Lys-682. Glycyl lysine isopeptide (Lys-Gly) (interchain with G-Cter in ubiquitin); alternate cross-links involve residues Lys-666, Lys-678, and Lys-682. Position 684 is an omega-N-methylarginine (Arg-684). At Ser-687 the chain carries Phosphoserine. Residue Lys-688 forms a Glycyl lysine isopeptide (Lys-Gly) (interchain with G-Cter in ubiquitin) linkage. Ser-691 is subject to Phosphoserine. Lys-704 is subject to N6-acetyllysine; alternate. Lys-704 participates in a covalent cross-link: Glycyl lysine isopeptide (Lys-Gly) (interchain with G-Cter in ubiquitin); alternate. Residue Lys-710 forms a Glycyl lysine isopeptide (Lys-Gly) (interchain with G-Cter in ubiquitin) linkage. Lys-720 carries the N6-acetyllysine; alternate modification. Lys-720 is covalently cross-linked (Glycyl lysine isopeptide (Lys-Gly) (interchain with G-Cter in ubiquitin); alternate). Tyr-729 carries the phosphotyrosine modification. A phosphoserine mark is found at Ser-731 and Ser-735. Residues 733 to 752 (VVSGDTSPRHLSNVSSTGSI) are disordered. The segment covering 736–751 (GDTSPRHLSNVSSTGS) has biased composition (polar residues). Thr-738 is modified (phosphothreonine). Residues Ser-739, Ser-744, Ser-751, and Ser-757 each carry the phosphoserine modification. The residue at position 762 (Thr-762) is a Phosphothreonine.

Interacts with MARK1, MARK2, MARK3 and MARK4. Interacts with SQSTM1 when polyubiquitinated. Interacts with PSMC2 through SQSTM1. Interacts with FKBP4. Binds to CSNK1D. Interacts with SGK1. Interacts with EPM2A; the interaction dephosphorylates MAPT at Ser-396. Interacts with PIN1. Interacts with LRRK2. Interacts with LRP1, leading to endocytosis; this interaction is reduced in the presence of LRPAP1/RAP. Polyubiquitinated. Requires functional TRAF6 and may provoke SQSTM1-dependent degradation by the proteasome. Post-translationally, phosphorylation at various serine and threonine residues in S-P or T-P motifs by proline-directed protein kinases (PDPK1, CDK1, CDK5, GSK3, MAPK) (a few sites per protein in interphase, more in mitosis), and at serine residues in K-X-G-S motifs by MAP/microtubule affinity-regulating kinase (MARK1, MARK2, MARK3 or MARK4), causing detachment from microtubules, and their disassembly. Phosphorylation at Ser-597 by BRSK1 and BRSK2 in neurons affects ability to bind microtubules and plays a role in neuron polarization. Phosphorylated by PHK. Dephosphorylation at several serine and threonine residues by the serine/threonine phosphatase PPP5C.

It is found in the cytoplasm. Its subcellular location is the cytosol. The protein localises to the cell membrane. It localises to the cytoskeleton. The protein resides in the cell projection. It is found in the axon. Its subcellular location is the dendrite. In terms of biological role, promotes microtubule assembly and stability, and might be involved in the establishment and maintenance of neuronal polarity. The C-terminus binds axonal microtubules while the N-terminus binds neural plasma membrane components, suggesting that tau functions as a linker protein between both. Axonal polarity is predetermined by tau localization (in the neuronal cell) in the domain of the cell body defined by the centrosome. The short isoforms allow plasticity of the cytoskeleton whereas the longer isoforms may preferentially play a role in its stabilization. The sequence is that of Microtubule-associated protein tau (MAPT) from Hylobates lar (Lar gibbon).